Reading from the N-terminus, the 28-residue chain is Dermaseptin-2 (28 aa).

Residue Q28 is modified to Glutamine amide.

Belongs to the frog skin active peptide (FSAP) family. Dermaseptin subfamily. In terms of tissue distribution, expressed by the skin glands.

It localises to the secreted. Its function is as follows. Antimicrobial peptide with activity against the Gram-positive bacterium S.aureus, and the Gram-negative bacteria E.coli and P.aeruginosa. Probably acts by disturbing membrane functions with its amphipathic structure. Has an activity of stimulation of insulin release, which may protect the species from being eaten by predators by causing fatal hypoglycemia. Has hemolytic activity (60% hemolysis at 128 ug/ml). The chain is Dermaseptin-2 from Phyllomedusa tarsius (Brownbelly leaf frog).